The primary structure comprises 787 residues: Protein translocase subunit SecA (787 aa).

Residues Gln85, 103-107, and Asp492 contribute to the ATP site; that span reads GEGKT.

Belongs to the SecA family. As to quaternary structure, monomer and homodimer. Part of the essential Sec protein translocation apparatus which comprises SecA, SecYEG and auxiliary proteins SecDF. Other proteins may also be involved.

The protein localises to the cell membrane. Its subcellular location is the cytoplasm. It carries out the reaction ATP + H2O + cellular proteinSide 1 = ADP + phosphate + cellular proteinSide 2.. In terms of biological role, part of the Sec protein translocase complex. Interacts with the SecYEG preprotein conducting channel. Has a central role in coupling the hydrolysis of ATP to the transfer of proteins into and across the cell membrane, serving as an ATP-driven molecular motor driving the stepwise translocation of polypeptide chains across the membrane. This is Protein translocase subunit SecA from Lactiplantibacillus plantarum (strain ATCC BAA-793 / NCIMB 8826 / WCFS1) (Lactobacillus plantarum).